Consider the following 782-residue polypeptide: MQKQIPQMVDPTLAEMGKNLDEAMKILEDNQRPSEEEKDGKKYTRKDIPGPLQGSGQNMVSVLQLVQNLMHDDEEEQSPSLRRIQNVGEQGHMALLGHSLAAYISVLDREHLRKLTTRILSDTTLWLCRLFRYDNGSAYYHEDDREGLLKVCRLVIHSRYEDYTTDGFNVLYNKLPVIYISAASRPGLGQSVCNQLGLPLSCLCRVPCNTMFGSQHEMDVALLDRLIKDDIQSGKCPLLLVANAGTPGAGHTDKLGRLKELCDQYNIWLHVEGVNLATLALGYVSSSVLAATKCDSMTLTLGPWLGLPAVPAVTLYRHEDPSLSLAAGLTSSQPVEKLRALPLWLSLQYLGHSGIVERIKHASQLSQKLLENLKNLSPVKTPVENDGSSPVVVFRFVYEGCKSDSTLNLSTIERDSDALNQWLGDQLAALVPSSGVDIVELEDEGTCVRFNPLMTCAVLGTTAEDVEQLVACLRMKIPVLENTLRLKEEFRQEVERIAGLSYINDYSWAGLGVLRYEQFSEEQDAAKREADLEKITVALLKKLNELETDLTFCSGPEFGAEKNCIYIGMASEDLDVSELVETITAMGREIEENSRLLENMTEVVRKGILEAEVQLNKANEERLLEEGVLRQIPLVGSMLNWLSPVQATPKGRTFNLTAGSLETTEMTYISKAQTTGLTPPPTPTSAHGKRQAGQKLFKRLSRNSDAMSETSSISHLEEVESLEALPMPEYDSSAAENSAMGEPFATAEQSSTPSIVPTETSSEGSQEPSIPSANTAESDSLR.

Basic and acidic residues predominate over residues Ile-26–Ile-48. 4 disordered regions span residues Ile-26–Gly-56, Gln-673–Lys-695, Arg-702–Ser-721, and Pro-726–Arg-782. Composition is skewed to polar residues over residues Asn-703 to Ser-714 and Ala-747 to Arg-782.

Belongs to the group II decarboxylase family. The cofactor is pyridoxal 5'-phosphate.

The polypeptide is Pyridoxal-dependent decarboxylase domain-containing protein 1 (pdxdc1) (Xenopus laevis (African clawed frog)).